A 178-amino-acid chain; its full sequence is Gamma-crystallin M1 (178 aa).

Beta/gamma crystallin 'Greek key' domains lie at 2–40 (GKIIFYDDRNFQGRSYDCMSDCSDISSYLSRVGSIRVES) and 41–86 (GCFM…RMIP). A connecting peptide region spans residues 87–91 (PYRGS). Beta/gamma crystallin 'Greek key' domains follow at residues 92-132 (YRMR…HVMD) and 133-175 (GHWL…RRIT).

Belongs to the beta/gamma-crystallin family. Monomer.

In terms of biological role, crystallins are the dominant structural components of the vertebrate eye lens. The polypeptide is Gamma-crystallin M1 (Cyprinus carpio (Common carp)).